We begin with the raw amino-acid sequence, 465 residues long: Ribulose bisphosphate carboxylase large chain (465 aa).

Lys-4 carries the N6,N6,N6-trimethyllysine modification. Positions 113 and 163 each coordinate substrate. The active-site Proton acceptor is the Lys-165. Lys-167 contacts substrate. Residues Lys-191, Asp-193, and Glu-194 each coordinate Mg(2+). Lys-191 carries the N6-carboxylysine modification. His-284 acts as the Proton acceptor in catalysis. Residues Arg-285, His-317, and Ser-369 each coordinate substrate.

It belongs to the RuBisCO large chain family. Type I subfamily. As to quaternary structure, heterohexadecamer of 8 large chains and 8 small chains; disulfide-linked. The disulfide link is formed within the large subunit homodimers. It depends on Mg(2+) as a cofactor. In terms of processing, the disulfide bond which can form in the large chain dimeric partners within the hexadecamer appears to be associated with oxidative stress and protein turnover.

The protein resides in the plastid. It is found in the chloroplast. The catalysed reaction is 2 (2R)-3-phosphoglycerate + 2 H(+) = D-ribulose 1,5-bisphosphate + CO2 + H2O. It catalyses the reaction D-ribulose 1,5-bisphosphate + O2 = 2-phosphoglycolate + (2R)-3-phosphoglycerate + 2 H(+). RuBisCO catalyzes two reactions: the carboxylation of D-ribulose 1,5-bisphosphate, the primary event in carbon dioxide fixation, as well as the oxidative fragmentation of the pentose substrate in the photorespiration process. Both reactions occur simultaneously and in competition at the same active site. The sequence is that of Ribulose bisphosphate carboxylase large chain from Fragaria ananassa (Strawberry).